The following is a 1108-amino-acid chain: Valine--tRNA ligase, mitochondrial 1 (1108 aa).

The transit peptide at 1 to 46 (MSLLFLRRAKPLFVSCCSATHSRSSFLSPTLTNQLVRSFHGSRTMS) directs the protein to the mitochondrion. The span at 57 to 93 (ELERKKKKEEKAKEKELKKQKALEKERLAELKAKQAK) shows a compositional bias: basic and acidic residues. Residues 57–138 (ELERKKKKEE…RKRLSSQMAK (82 aa)) form a disordered region. The 'HIGH' region motif lies at 177–187 (PNVTGALHIGH). Positions 695–699 (KMSKS) match the 'KMSKS' region motif. Residue K698 participates in ATP binding. The stretch at 1032–1064 (AINTEAEQEKIRNKIGELQKQKEKLQKMMSVST) forms a coiled coil.

Belongs to the class-I aminoacyl-tRNA synthetase family.

It localises to the mitochondrion. The protein localises to the cytoplasm. Its subcellular location is the cytosol. The catalysed reaction is tRNA(Val) + L-valine + ATP = L-valyl-tRNA(Val) + AMP + diphosphate. Functionally, required for embryo development and seed viability. This Arabidopsis thaliana (Mouse-ear cress) protein is Valine--tRNA ligase, mitochondrial 1.